Reading from the N-terminus, the 505-residue chain is Maturase K (505 aa).

This sequence belongs to the intron maturase 2 family. MatK subfamily.

The protein resides in the plastid. It is found in the chloroplast. Functionally, usually encoded in the trnK tRNA gene intron. Probably assists in splicing its own and other chloroplast group II introns. The sequence is that of Maturase K from Cubanola domingensis.